Reading from the N-terminus, the 357-residue chain is Protein RecA (357 aa).

67–74 (GPESSGKT) lines the ATP pocket.

It belongs to the RecA family.

It is found in the cytoplasm. Functionally, can catalyze the hydrolysis of ATP in the presence of single-stranded DNA, the ATP-dependent uptake of single-stranded DNA by duplex DNA, and the ATP-dependent hybridization of homologous single-stranded DNAs. It interacts with LexA causing its activation and leading to its autocatalytic cleavage. This is Protein RecA from Shewanella oneidensis (strain ATCC 700550 / JCM 31522 / CIP 106686 / LMG 19005 / NCIMB 14063 / MR-1).